The sequence spans 58 residues: MIKLISITQIKSSIGRLPKHKATLSGLGLRYIGHTVLRKNTPSVRGMIKLLSFMLRIN.

Belongs to the universal ribosomal protein uL30 family. As to quaternary structure, part of the 50S ribosomal subunit.

This Buchnera aphidicola subsp. Baizongia pistaciae (strain Bp) protein is Large ribosomal subunit protein uL30.